Reading from the N-terminus, the 312-residue chain is 4-hydroxy-3-methylbut-2-enyl diphosphate reductase (312 aa).

A [4Fe-4S] cluster-binding site is contributed by Cys-14. The (2E)-4-hydroxy-3-methylbut-2-enyl diphosphate site is built by His-43 and His-76. Dimethylallyl diphosphate contacts are provided by His-43 and His-76. Residues His-43 and His-76 each coordinate isopentenyl diphosphate. Cys-98 serves as a coordination point for [4Fe-4S] cluster. His-125 contacts (2E)-4-hydroxy-3-methylbut-2-enyl diphosphate. His-125 contributes to the dimethylallyl diphosphate binding site. His-125 contributes to the isopentenyl diphosphate binding site. The Proton donor role is filled by Glu-127. (2E)-4-hydroxy-3-methylbut-2-enyl diphosphate is bound at residue Thr-165. Residue Cys-195 coordinates [4Fe-4S] cluster. Residues Ser-223, Ser-224, Asn-225, and Ser-269 each contribute to the (2E)-4-hydroxy-3-methylbut-2-enyl diphosphate site. The dimethylallyl diphosphate site is built by Ser-223, Ser-224, Asn-225, and Ser-269. Residues Ser-223, Ser-224, Asn-225, and Ser-269 each contribute to the isopentenyl diphosphate site.

It belongs to the IspH family. [4Fe-4S] cluster serves as cofactor.

The catalysed reaction is isopentenyl diphosphate + 2 oxidized [2Fe-2S]-[ferredoxin] + H2O = (2E)-4-hydroxy-3-methylbut-2-enyl diphosphate + 2 reduced [2Fe-2S]-[ferredoxin] + 2 H(+). It carries out the reaction dimethylallyl diphosphate + 2 oxidized [2Fe-2S]-[ferredoxin] + H2O = (2E)-4-hydroxy-3-methylbut-2-enyl diphosphate + 2 reduced [2Fe-2S]-[ferredoxin] + 2 H(+). It functions in the pathway isoprenoid biosynthesis; dimethylallyl diphosphate biosynthesis; dimethylallyl diphosphate from (2E)-4-hydroxy-3-methylbutenyl diphosphate: step 1/1. It participates in isoprenoid biosynthesis; isopentenyl diphosphate biosynthesis via DXP pathway; isopentenyl diphosphate from 1-deoxy-D-xylulose 5-phosphate: step 6/6. Catalyzes the conversion of 1-hydroxy-2-methyl-2-(E)-butenyl 4-diphosphate (HMBPP) into a mixture of isopentenyl diphosphate (IPP) and dimethylallyl diphosphate (DMAPP). Acts in the terminal step of the DOXP/MEP pathway for isoprenoid precursor biosynthesis. This chain is 4-hydroxy-3-methylbut-2-enyl diphosphate reductase, found in Leptospira interrogans serogroup Icterohaemorrhagiae serovar copenhageni (strain Fiocruz L1-130).